The chain runs to 962 residues: Vacuolar membrane protease (962 aa).

Over 1–15 (MVSSRRGFNPIAFTP) the chain is Cytoplasmic. A helical transmembrane segment spans residues 16-36 (WPVTILSSLVYLALIIPIIVV). Over 37–390 (HHLVPPAPKE…FQLNTLFGHS (354 aa)) the chain is Vacuolar. Asparagine 110 and asparagine 113 each carry an N-linked (GlcNAc...) asparagine glycan. 2 residues coordinate Zn(2+): histidine 169 and aspartate 181. Residue glutamate 215 is the Proton acceptor of the active site. Zn(2+) contacts are provided by glutamate 216, glutamate 241, and histidine 314. Residues 391-411 (VALLVVAPLLLIITSVALFAV) traverse the membrane as a helical segment. Over 412–440 (DKMYMFSMYTYISESGGQVSLYGLRGMFR) the chain is Cytoplasmic. A helical transmembrane segment spans residues 441–461 (FPLILGISTALTIALAFLIMK). Residues 462–472 (VNPFIIYSSPY) lie on the Vacuolar side of the membrane. The chain crosses the membrane as a helical span at residues 473–493 (AVWSMMLSTCMFFAWFISCVA). Topologically, residues 494 to 503 (DFARPSALHR) are cytoplasmic. The helical transmembrane segment at 504-524 (AYSFSWMFGIMWVFLVIATVY) threads the bilayer. Over 525–534 (QKQHGIASSY) the chain is Vacuolar. Residues 535–555 (FIVFYFAGVAVATWISYLELF) traverse the membrane as a helical segment. Residues 556-667 (GLPKTQDYAR…WSIYLMSSAW (112 aa)) lie on the Cytoplasmic side of the membrane. The segment at 568-617 (GRLSDRTPSSDSHFLAPSADELPSSSSAAGRDFNPEDVEDEEPTESTSLL) is disordered. Over residues 602 to 611 (PEDVEDEEPT) the composition is skewed to acidic residues. A helical membrane pass occupies residues 668–688 (ILQFLLVAPIVIILLGQLGLF). The Vacuolar segment spans residues 689-704 (LTSATYQIGADGGSQL). A helical transmembrane segment spans residues 705 to 725 (VIYIGIAVLSVLILLPLFPFI). Residues 726 to 731 (HRFTYH) lie on the Cytoplasmic side of the membrane. Residues 732–752 (IPTFLLFILIGTLVYNLTAFP) traverse the membrane as a helical segment. The Vacuolar segment spans residues 753–962 (FSHSNRLKLA…LVEGSYSFKL (210 aa)). N-linked (GlcNAc...) asparagine glycosylation is present at asparagine 834.

Belongs to the peptidase M28 family. Requires Zn(2+) as cofactor.

It localises to the vacuole membrane. May be involved in vacuolar sorting and osmoregulation. This is Vacuolar membrane protease from Arthroderma benhamiae (strain ATCC MYA-4681 / CBS 112371) (Trichophyton mentagrophytes).